A 444-amino-acid chain; its full sequence is Endothelin-3 receptor (444 aa).

The signal sequence occupies residues 1-18; it reads MATVILFVAWMACLMVGV. The Extracellular segment spans residues 19–88; it reads CYQEFQTQQN…SRAKIRHAFK (70 aa). Asn60 carries an N-linked (GlcNAc...) asparagine glycan. A helical transmembrane segment spans residues 89-113; the sequence is YVTTILSCVIFLVGIVGNSTLLRII. At 114–124 the chain is on the cytoplasmic side; that stretch reads YKNKCMRNGPN. A helical transmembrane segment spans residues 125–145; sequence VLIASLALGDLFYILIAIPII. The Extracellular portion of the chain corresponds to 146-161; that stretch reads SISFWLSTGHSEYIYQ. Residues 162-180 traverse the membrane as a helical segment; it reads LVHLYRARVYSLSLCALSI. Over 181–201 the chain is Cytoplasmic; that stretch reads DRYRAVASWNRIRSIGIPVRK. The helical transmembrane segment at 202–226 threads the bilayer; it reads AIELTLIWAVAIIVAVPEAIAFNLV. The Extracellular portion of the chain corresponds to 227–254; that stretch reads ELDFRGQTILVCMLPMEQTSDFMRFYQE. A helical transmembrane segment spans residues 255-279; the sequence is VKVWWLFGFYFCLPLACTGVFYTLM. The Cytoplasmic segment spans residues 280–307; sequence SCEMLSIKNGMRIALNDHMKQRREVAKT. Residues 308-328 form a helical membrane-spanning segment; the sequence is VFCLVVIFALCWLPLHVSSIF. Topologically, residues 329 to 365 are extracellular; it reads VRLSATVKRACILKNKRSCIMAEIQTGVNYQLLMVMN. Residues 366 to 386 form a helical membrane-spanning segment; sequence YTGINMASLNSCIGPVALYFV. Residues 387-444 lie on the Cytoplasmic side of the membrane; that stretch reads SRKFKNCFQSCLCCWCHRPTLTITPMDEKGSGGKWKANGHDLDLDRSSSRLSNKYSSS. The interval 416-444 is disordered; sequence GSGGKWKANGHDLDLDRSSSRLSNKYSSS. A compositionally biased stretch (basic and acidic residues) spans 424–434; that stretch reads NGHDLDLDRSS. Positions 435-444 are enriched in low complexity; sequence SRLSNKYSSS.

The protein belongs to the G-protein coupled receptor 1 family. Endothelin receptor subfamily.

Its subcellular location is the cell membrane. Its function is as follows. Receptor for endothelin-3. Mediates its action by association with G proteins that activate a phosphatidylinositol-calcium second messenger system. The protein is Endothelin-3 receptor of Xenopus laevis (African clawed frog).